We begin with the raw amino-acid sequence, 461 residues long: Probable lipid II flippase MurJ (461 aa).

12 helical membrane passes run 5–25 (ILGAGVYSDIFFVAFKLPNLF), 51–71 (FASLVGLIFCIVLFMWCLLVA), 96–116 (IVAINFWYLLLVFITTFLGAL), 123–143 (FFASAYSASLLNVCMILALLI), 156–176 (LSYGVLLGGVAQILLHFYPLV), 229–249 (IASFLDTTIASFLASGSVSYL), 258–278 (LPLALFAIAISTALFPSIAIA), 293–313 (KAWFFLVGVLLLCSIGGIMLS), 337–357 (VFSLYLLGLLPFGLTKLFSLW), 372–392 (LISLFLGLAASLSLMPLLGVL), 402–422 (GLFLFVLTIKAFGFQLFLGII), and 429–449 (LVILFLACVEILLLLAFKSWV).

The protein belongs to the MurJ/MviN family.

It is found in the cell inner membrane. It functions in the pathway cell wall biogenesis; peptidoglycan biosynthesis. In terms of biological role, involved in peptidoglycan biosynthesis. Transports lipid-linked peptidoglycan precursors from the inner to the outer leaflet of the cytoplasmic membrane. This is Probable lipid II flippase MurJ from Helicobacter pylori (strain ATCC 700392 / 26695) (Campylobacter pylori).